The primary structure comprises 370 residues: Prolactin-releasing peptide receptor (370 aa).

The segment at M1 to E34 is disordered. At M1–L62 the chain is on the extracellular side. Positions A21 to E34 are enriched in polar residues. N27 and N36 each carry an N-linked (GlcNAc...) asparagine glycan. The helical transmembrane segment at I63–L83 threads the bilayer. At V84–N101 the chain is on the cytoplasmic side. A helical membrane pass occupies residues L102–F122. Residues E123 to G126 lie on the Extracellular side of the membrane. Residues W127–V147 form a helical membrane-spanning segment. The cysteines at positions 134 and 211 are disulfide-linked. Over S148–L175 the chain is Cytoplasmic. The helical transmembrane segment at S176–V196 threads the bilayer. At H197–Q223 the chain is on the extracellular side. The helical transmembrane segment at I224–S244 threads the bilayer. Topologically, residues Y245 to T276 are cytoplasmic. A helical transmembrane segment spans residues F277 to F297. Residues N298–Q317 lie on the Extracellular side of the membrane. A helical membrane pass occupies residues L318–L338. Over H339 to I370 the chain is Cytoplasmic. The tract at residues T365–I370 is required for interaction with GRIP1, GRIP2 and PICK1.

The protein belongs to the G-protein coupled receptor 1 family. Interacts through its C-terminal region with the PDZ domain-containing proteins GRIP1, GRIP2 and PICK1. Interacts with PDZ domains 4 and 5 of GRIP1 and with the PDZ domain of PICK1. Widely expressed, with highest levels in pituitary, cerebellum, and hypothalamus.

The protein localises to the cell membrane. Receptor for prolactin-releasing peptide (PrRP). Implicated in lactation, regulation of food intake and pain-signal processing. This chain is Prolactin-releasing peptide receptor (Prlhr), found in Rattus norvegicus (Rat).